The following is a 147-amino-acid chain: Membrane-spanning 4-domains subfamily A member 6E (147 aa).

Topologically, residues 1–52 are cytoplasmic; sequence MTSQPISNETIIMLPSNVINFSQAEKPEPTNQGQDSLKKRLQAKVKVIGVHS. Residues 53–73 traverse the membrane as a helical segment; the sequence is SLAGSILSALSALVGFILLSV. Topologically, residues 74–120 are extracellular; that stretch reads NPAALNPASLQCKLDEKDIPTRLLLSYDYHSPYTMDCHRAKASLAGT. Residues 121–141 form a helical membrane-spanning segment; sequence LSLMLVSTVLEFCLAVLTAVL. Over 142 to 147 the chain is Cytoplasmic; the sequence is QWKQTV.

Belongs to the MS4A family. As to expression, expressed by malignant and fetal tissue at very low levels.

The protein resides in the membrane. May be involved in signal transduction as a component of a multimeric receptor complex. This is Membrane-spanning 4-domains subfamily A member 6E (MS4A6E) from Homo sapiens (Human).